Consider the following 271-residue polypeptide: MIHSKRLKLCLCLIILSVFIGACGMKKEESSKDKQIKENFNKILSLYPTKNLEDFYDKEGFRDEEFEKGDKGTWIIHSKMIIETNNSNMESRGMVLYINRNTRTTKGNFVVREITEDSKGYSHSKDTKYPVKMEHNRIIPTKPIADDKLRKEIENFKFFVQYGDFKDINDYKDGDISYNPNVPSYSAKYQLSNDDYNVKQLRKRYNIPTNKAPKLLLKGDGDLKGSSVGSKNLEFTFVENKEENIYFTDSVQYTPSEDTSYESNGISNKSW.

An N-terminal signal peptide occupies residues 1 to 22 (MIHSKRLKLCLCLIILSVFIGA). Cysteine 23 carries N-palmitoyl cysteine lipidation. Residue cysteine 23 is the site of S-diacylglycerol cysteine attachment.

Belongs to the staphylococcal tandem lipoprotein family.

It localises to the cell membrane. This is an uncharacterized protein from Staphylococcus aureus (strain MW2).